A 335-amino-acid chain; its full sequence is Nuclear transcription factor Y subunit gamma (335 aa).

It belongs to the NFYC/HAP5 subunit family. As to quaternary structure, heterotrimeric transcription factor composed of three components, NF-YA, NF-YB and NF-YC. NF-YB and NF-YC must interact and dimerize for NF-YA association and DNA binding.

It localises to the nucleus. Functionally, component of the sequence-specific heterotrimeric transcription factor (NF-Y) which specifically recognizes a 5'-CCAAT-3' box motif found in the promoters of its target genes. NF-Y can function as both an activator and a repressor, depending on its interacting cofactors. This Pongo abelii (Sumatran orangutan) protein is Nuclear transcription factor Y subunit gamma (NFYC).